The chain runs to 357 residues: GTPase Obg (357 aa).

An Obg domain is found at 1–159 (MKFVDEAEIQ…RTLKLELKLL (159 aa)). The OBG-type G domain maps to 160–343 (ADIGMLGFPN…IMKSAMTLFE (184 aa)). GTP is bound by residues 166–173 (GFPNVGKS), 191–195 (FTTLY), 213–216 (DVPG), 293–296 (NKAD), and 324–326 (SAV). Residues S173 and T193 each coordinate Mg(2+).

Belongs to the TRAFAC class OBG-HflX-like GTPase superfamily. OBG GTPase family. In terms of assembly, monomer. Mg(2+) is required as a cofactor.

The protein resides in the cytoplasm. Functionally, an essential GTPase which binds GTP, GDP and possibly (p)ppGpp with moderate affinity, with high nucleotide exchange rates and a fairly low GTP hydrolysis rate. Plays a role in control of the cell cycle, stress response, ribosome biogenesis and in those bacteria that undergo differentiation, in morphogenesis control. The chain is GTPase Obg from Xylella fastidiosa (strain 9a5c).